The following is a 257-amino-acid chain: Protein patched homolog 1 (257 aa).

At alanine 1–aspartate 199 the chain is on the extracellular side. N-linked (GlcNAc...) asparagine glycans are attached at residues asparagine 75, asparagine 114, and asparagine 177. The chain crosses the membrane as a helical span at residues isoleucine 200–methionine 220. The SSD domain occupies serine 201–serine 257. The Cytoplasmic portion of the chain corresponds to leucine 221–alanine 235. A helical transmembrane segment spans residues glycine 236–isoleucine 256.

It belongs to the patched family. Post-translationally, glycosylation is necessary for SHH binding. In terms of tissue distribution, in the eye, detected in neural retina, iris, retinal pigment epithelium, but not in lens.

Its subcellular location is the membrane. Functionally, acts as a receptor for sonic hedgehog (SHH), indian hedgehog (IHH) and desert hedgehog (DHH). Associates with the smoothened protein (SMO) to transduce the hedgehog's proteins signal. The chain is Protein patched homolog 1 (PTC1) from Cynops pyrrhogaster (Japanese fire-bellied newt).